The chain runs to 356 residues: Isopentenyl-diphosphate delta-isomerase (356 aa).

8 to 9 (RK) contributes to the substrate binding site. FMN-binding positions include 66 to 68 (AIT), S96, and N124. 96–98 (SQR) is a binding site for substrate. Q160 provides a ligand contact to substrate. E161 contacts Mg(2+). Residues K201, T231, 280–282 (GIR), and 301–302 (AL) contribute to the FMN site.

Belongs to the IPP isomerase type 2 family. Homooctamer. Dimer of tetramers. The cofactor is FMN. Requires NADPH as cofactor. Mg(2+) serves as cofactor.

It is found in the cytoplasm. It catalyses the reaction isopentenyl diphosphate = dimethylallyl diphosphate. Its function is as follows. Involved in the biosynthesis of isoprenoids. Catalyzes the 1,3-allylic rearrangement of the homoallylic substrate isopentenyl (IPP) to its allylic isomer, dimethylallyl diphosphate (DMAPP). This Methanococcus aeolicus (strain ATCC BAA-1280 / DSM 17508 / OCM 812 / Nankai-3) protein is Isopentenyl-diphosphate delta-isomerase.